A 279-amino-acid polypeptide reads, in one-letter code: Lactose operon transcription activator (279 aa).

The 99-residue stretch at 174 to 272 (QHAVDFINTN…EISASEYRHH (99 aa)) folds into the HTH araC/xylS-type domain. DNA-binding regions (H-T-H motif) lie at residues 191–212 (EDVAKSVNITRSHLYKLFKKNL) and 239–262 (ISDISRQVGYKDPLLFSKNFTKHF).

Transcriptional regulator of the lacPH genes for lactose utilization. The polypeptide is Lactose operon transcription activator (lacR) (Staphylococcus xylosus).